The primary structure comprises 432 residues: Adenylosuccinate synthetase (432 aa).

GTP-binding positions include glycine 13–lysine 19 and glycine 41–threonine 43. Aspartate 14 (proton acceptor) is an active-site residue. Positions 14 and 41 each coordinate Mg(2+). Residues aspartate 14 to lysine 17, asparagine 39 to histidine 42, threonine 130, arginine 144, glutamine 225, threonine 240, and arginine 304 each bind IMP. The active-site Proton donor is the histidine 42. Alanine 300–arginine 306 is a binding site for substrate. Residues arginine 306, lysine 332–aspartate 334, and serine 415–glycine 417 contribute to the GTP site.

Belongs to the adenylosuccinate synthetase family. As to quaternary structure, homodimer. Mg(2+) serves as cofactor.

The protein localises to the cytoplasm. The enzyme catalyses IMP + L-aspartate + GTP = N(6)-(1,2-dicarboxyethyl)-AMP + GDP + phosphate + 2 H(+). It participates in purine metabolism; AMP biosynthesis via de novo pathway; AMP from IMP: step 1/2. Functionally, plays an important role in the de novo pathway of purine nucleotide biosynthesis. Catalyzes the first committed step in the biosynthesis of AMP from IMP. The sequence is that of Adenylosuccinate synthetase from Salmonella arizonae (strain ATCC BAA-731 / CDC346-86 / RSK2980).